A 35-amino-acid chain; its full sequence is Mu-theraphotoxin-Ca2a (35 aa).

Cystine bridges form between Cys2-Cys17, Cys9-Cys24, and Cys16-Cys31.

The protein belongs to the neurotoxin 10 (Hwtx-1) family. 10 (haplotoxin-1) subfamily. As to expression, expressed by the venom gland.

The protein resides in the secreted. Potently inhibits Nav1.7/SCN9A (IC(50)=98.1 nM), and moderately inhibits Nav1.2/SCN2A (IC(50)=216.3 nM), Nav1.6/SCN8A (IC(50)=313.6 nM), and Nav1.3/SCN3A (IC(50)=491.3 nM). Hyperpolarizes the slow inactivation, but does not alter the voltage-dependent activation or fast inactivation of Nav1.7/SCN9A. Binds with Nav1.7/SCN9A at the extracellular S3-S4 linker of domain II (site 4). In vivo, exhibits dose-dependent analgesic efficacy by reducing pain responses in rodent models of formalin-induced paw licking, hot plate test, and acetic acid-induced writhing. The polypeptide is Mu-theraphotoxin-Ca2a (Cyriopagopus albostriatus (Cambodian tiger tarantula)).